A 424-amino-acid chain; its full sequence is MDKLRMVGGTPLKGEVVIAGAKNAALPILCACLLTDQPVVLRNVPDLQDVRTMLKLLQEIGVTIDFPSAGDRSYMVLNAAVIKSSEATYEMVKTMRASILVLGPLLARMHSAKVSLPGGCAIGARPVDQHIKGLKAMGATIKIKSGYIQAETKPQSDRLKGASILTDMITVTGTENLLMAATLASGTTVLENAAREPEVGDLAELLVKMGAKISGIGSDRLVIEGVDKLHGAEHSVIPDRIEAGTFLCAVVATGGEITVKHCRPDTLDAVIVKLKEAGLQTEIGPDWIKASMQGRPKAVNFRTSEYPAFPTDMQAQLMTVNAIAAGSSMITETIFENRFMHVQELNRLGADIAIEGNTAIAQGVEKLSGAIVMATDLRASASLVIAGLAAQGETQVDRIYHLDRGYDRMEQKLTLLGANIERIK.

Position 22–23 (22–23 (KN)) interacts with phosphoenolpyruvate. R96 provides a ligand contact to UDP-N-acetyl-alpha-D-glucosamine. The Proton donor role is filled by C120. The residue at position 120 (C120) is a 2-(S-cysteinyl)pyruvic acid O-phosphothioketal. Residues 125–129 (RPVDQ), D312, and I334 contribute to the UDP-N-acetyl-alpha-D-glucosamine site.

It belongs to the EPSP synthase family. MurA subfamily.

It is found in the cytoplasm. The catalysed reaction is phosphoenolpyruvate + UDP-N-acetyl-alpha-D-glucosamine = UDP-N-acetyl-3-O-(1-carboxyvinyl)-alpha-D-glucosamine + phosphate. It functions in the pathway cell wall biogenesis; peptidoglycan biosynthesis. Functionally, cell wall formation. Adds enolpyruvyl to UDP-N-acetylglucosamine. This Polynucleobacter necessarius subsp. necessarius (strain STIR1) protein is UDP-N-acetylglucosamine 1-carboxyvinyltransferase.